The primary structure comprises 284 residues: L-ribulose-5-phosphate 3-epimerase UlaE (284 aa).

This sequence belongs to the L-ribulose-5-phosphate 3-epimerase family.

The enzyme catalyses L-ribulose 5-phosphate = L-xylulose 5-phosphate. It participates in cofactor degradation; L-ascorbate degradation; D-xylulose 5-phosphate from L-ascorbate: step 3/4. Its function is as follows. Catalyzes the isomerization of L-xylulose-5-phosphate to L-ribulose-5-phosphate. Is involved in the anaerobic L-ascorbate utilization. The chain is L-ribulose-5-phosphate 3-epimerase UlaE from Escherichia coli O127:H6 (strain E2348/69 / EPEC).